Here is a 367-residue protein sequence, read N- to C-terminus: UDP-N-acetylglucosamine--N-acetylmuramyl-(pentapeptide) pyrophosphoryl-undecaprenol N-acetylglucosamine transferase (367 aa).

Residues T15–G17, N127, R163, S191, I249, and Q294 contribute to the UDP-N-acetyl-alpha-D-glucosamine site.

The protein belongs to the glycosyltransferase 28 family. MurG subfamily.

The protein resides in the cell inner membrane. It carries out the reaction di-trans,octa-cis-undecaprenyl diphospho-N-acetyl-alpha-D-muramoyl-L-alanyl-D-glutamyl-meso-2,6-diaminopimeloyl-D-alanyl-D-alanine + UDP-N-acetyl-alpha-D-glucosamine = di-trans,octa-cis-undecaprenyl diphospho-[N-acetyl-alpha-D-glucosaminyl-(1-&gt;4)]-N-acetyl-alpha-D-muramoyl-L-alanyl-D-glutamyl-meso-2,6-diaminopimeloyl-D-alanyl-D-alanine + UDP + H(+). It functions in the pathway cell wall biogenesis; peptidoglycan biosynthesis. In terms of biological role, cell wall formation. Catalyzes the transfer of a GlcNAc subunit on undecaprenyl-pyrophosphoryl-MurNAc-pentapeptide (lipid intermediate I) to form undecaprenyl-pyrophosphoryl-MurNAc-(pentapeptide)GlcNAc (lipid intermediate II). The chain is UDP-N-acetylglucosamine--N-acetylmuramyl-(pentapeptide) pyrophosphoryl-undecaprenol N-acetylglucosamine transferase from Burkholderia multivorans (strain ATCC 17616 / 249).